The following is a 343-amino-acid chain: Biotin synthase (343 aa).

The Radical SAM core domain maps to 36–254; sequence NTIQISTLLS…IAVARIMMPK (219 aa). [4Fe-4S] cluster-binding residues include Cys-51, Cys-55, and Cys-58. [2Fe-2S] cluster contacts are provided by Cys-95, Cys-126, Cys-186, and Arg-258.

This sequence belongs to the radical SAM superfamily. Biotin synthase family. As to quaternary structure, homodimer. [4Fe-4S] cluster is required as a cofactor. It depends on [2Fe-2S] cluster as a cofactor.

It catalyses the reaction (4R,5S)-dethiobiotin + (sulfur carrier)-SH + 2 reduced [2Fe-2S]-[ferredoxin] + 2 S-adenosyl-L-methionine = (sulfur carrier)-H + biotin + 2 5'-deoxyadenosine + 2 L-methionine + 2 oxidized [2Fe-2S]-[ferredoxin]. Its pathway is cofactor biosynthesis; biotin biosynthesis; biotin from 7,8-diaminononanoate: step 2/2. Functionally, catalyzes the conversion of dethiobiotin (DTB) to biotin by the insertion of a sulfur atom into dethiobiotin via a radical-based mechanism. The polypeptide is Biotin synthase (Buchnera aphidicola subsp. Acyrthosiphon pisum (strain APS) (Acyrthosiphon pisum symbiotic bacterium)).